We begin with the raw amino-acid sequence, 567 residues long: Polyadenylate-binding protein-interacting protein 7 (567 aa).

Positions Met1–Leu22 are disordered. Positions Ser13–Leu22 are enriched in polar residues. The short motif at Thr21–Pro31 is the PAM2-like element. Positions Asp215–Leu259 constitute a CUE domain. A disordered region spans residues Arg355–Ser387. A compositionally biased stretch (polar residues) spans Ala359–Ala371. One can recognise a Smr domain in the interval Ile485 to Tyr567.

In terms of assembly, interacts with MPC and PAB2. Expressed in cauline leaves, stems, rosette leaves, immature siliques and primary inflorescences.

This chain is Polyadenylate-binding protein-interacting protein 7 (CID7), found in Arabidopsis thaliana (Mouse-ear cress).